The sequence spans 374 residues: Probable neutral protease 2 homolog ARB_00849 (374 aa).

A signal peptide spans 1–19 (MKFLTALSAIGALVATATA). A propeptide spanning residues 20-189 (AAVPNTPAKQ…KKSRGTIDKR (170 aa)) is cleaved from the precursor. 2 disulfides stabilise this stretch: cysteine 197-cysteine 268 and cysteine 275-cysteine 293. Zn(2+) is bound at residue histidine 318. Glutamate 319 is an active-site residue. Residues histidine 322 and aspartate 333 each coordinate Zn(2+).

This sequence belongs to the peptidase M35 family. Zn(2+) serves as cofactor.

The protein localises to the secreted. The catalysed reaction is Preferential cleavage of bonds with hydrophobic residues in P1'. Also 3-Asn-|-Gln-4 and 8-Gly-|-Ser-9 bonds in insulin B chain.. Its function is as follows. Probable secreted metalloprotease that shows high activities on basic nuclear substrates such as histone and protamine. May be involved in virulence. The protein is Probable neutral protease 2 homolog ARB_00849 of Arthroderma benhamiae (strain ATCC MYA-4681 / CBS 112371) (Trichophyton mentagrophytes).